Consider the following 787-residue polypeptide: Phenylalanine--tRNA ligase beta subunit (787 aa).

In terms of domain architecture, tRNA-binding spans 39–149 (APAFAGVVIA…EDAPVGTNIR (111 aa)). The B5 domain maps to 400–475 (PEAKQVGLRL…RVYGYENIPD (76 aa)). 4 residues coordinate Mg(2+): D453, D459, E462, and E463. The 93-residue stretch at 694 to 786 (SKFQPVRRDL…AATAAGARLR (93 aa)) folds into the FDX-ACB domain.

This sequence belongs to the phenylalanyl-tRNA synthetase beta subunit family. Type 1 subfamily. Tetramer of two alpha and two beta subunits. Mg(2+) is required as a cofactor.

The protein resides in the cytoplasm. The catalysed reaction is tRNA(Phe) + L-phenylalanine + ATP = L-phenylalanyl-tRNA(Phe) + AMP + diphosphate + H(+). The chain is Phenylalanine--tRNA ligase beta subunit (pheT) from Neisseria meningitidis serogroup B (strain ATCC BAA-335 / MC58).